The sequence spans 170 residues: Group 2 truncated hemoglobin 3-1 (170 aa).

Residue His98 participates in heme b binding.

Belongs to the truncated hemoglobin family. Group II subfamily. Homodimer when ferric.

In terms of biological role, hemoglobin-like protein that exhibits an unusual concentration-independent binding of O(2) and CO. Required for general plant development and during nodulation. May promote shoot organogenesis from root explants. This chain is Group 2 truncated hemoglobin 3-1, found in Medicago truncatula (Barrel medic).